The chain runs to 259 residues: MSKRIEVNDLNVYYGKFHAVEDVSLTIEPRSVTAFIGPSGCGKSTFLRTLNRMHEVIPGAYVEGEVLIDGNNLYGAGVDPVLVRRQVGMVFQRPNPFPTMSIRDNVLAGVKLNNHRISKTDADDLVEGSLRGANLWNEVKDRLNLPGSGLSGGQQQRLCIARAIAVSPDVLLMDEPCSALDPISTLAIEDLIEELKNDYTIVIVTHNMQQASRVSDRTAFFTIAGTGKPGKLIEYNDTNIIFSNPSAQATEDYVSGRFG.

Positions 5–248 constitute an ABC transporter domain; it reads IEVNDLNVYY…NIIFSNPSAQ (244 aa). 37 to 44 is an ATP binding site; the sequence is GPSGCGKS.

It belongs to the ABC transporter superfamily. Phosphate importer (TC 3.A.1.7) family. As to quaternary structure, the complex is composed of two ATP-binding proteins (PstB), two transmembrane proteins (PstC and PstA) and a solute-binding protein (PstS).

The protein resides in the cell membrane. The enzyme catalyses phosphate(out) + ATP + H2O = ADP + 2 phosphate(in) + H(+). Functionally, part of the ABC transporter complex PstSACB involved in phosphate import. Responsible for energy coupling to the transport system. The sequence is that of Phosphate import ATP-binding protein PstB from Leifsonia xyli subsp. xyli (strain CTCB07).